Here is a 502-residue protein sequence, read N- to C-terminus: Glucose-6-phosphate isomerase (502 aa).

Glu-331 functions as the Proton donor in the catalytic mechanism. Catalysis depends on residues His-362 and Lys-471.

It belongs to the GPI family.

It is found in the cytoplasm. It catalyses the reaction alpha-D-glucose 6-phosphate = beta-D-fructose 6-phosphate. The protein operates within carbohydrate biosynthesis; gluconeogenesis. Its pathway is carbohydrate degradation; glycolysis; D-glyceraldehyde 3-phosphate and glycerone phosphate from D-glucose: step 2/4. Catalyzes the reversible isomerization of glucose-6-phosphate to fructose-6-phosphate. The protein is Glucose-6-phosphate isomerase of Xylella fastidiosa (strain M12).